The sequence spans 161 residues: uncharacterized protein (161 aa).

Residues 1 to 29 are a coiled coil; that stretch reads MTLYDTVKELQEKLRNGEIEINTFLERLG.

This is an uncharacterized protein from Acidianus convivator (ATV).